A 70-amino-acid chain; its full sequence is Small ribosomal subunit protein bS21 (70 aa).

This sequence belongs to the bacterial ribosomal protein bS21 family.

The sequence is that of Small ribosomal subunit protein bS21 from Polynucleobacter asymbioticus (strain DSM 18221 / CIP 109841 / QLW-P1DMWA-1) (Polynucleobacter necessarius subsp. asymbioticus).